Reading from the N-terminus, the 207-residue chain is MISRKSFDDQIKIVHNITYLSGSDEAGRGCLAGPLVVASVILKPDYFNPLIKDSKKLNPKTRQVLYDEIIKNCLDYQIIIISSKQVDELNPLQASLLGFKTTINNLKITPDLALIDGNQNIELTNIKTLQIIKGDDKSFSIACSSILAKVTRDKILDEYDQIYPNYDFKSHKGYCTKKHLLAIQKYGILDIHRKSYKPIKKISKETS.

An RNase H type-2 domain is found at 18–207 (TYLSGSDEAG…PIKKISKETS (190 aa)). Residues Asp24, Glu25, and Asp116 each contribute to the a divalent metal cation site.

This sequence belongs to the RNase HII family. Mn(2+) serves as cofactor. It depends on Mg(2+) as a cofactor.

Its subcellular location is the cytoplasm. The enzyme catalyses Endonucleolytic cleavage to 5'-phosphomonoester.. Its function is as follows. Endonuclease that specifically degrades the RNA of RNA-DNA hybrids. The polypeptide is Ribonuclease HII (Mycoplasma mycoides subsp. mycoides SC (strain CCUG 32753 / NCTC 10114 / PG1)).